Here is a 288-residue protein sequence, read N- to C-terminus: Light-independent protochlorophyllide reductase iron-sulfur ATP-binding protein (288 aa).

ATP is bound by residues 10–15 and lysine 39; that span reads GIGKST. Residue serine 14 coordinates Mg(2+). 2 residues coordinate [4Fe-4S] cluster: cysteine 95 and cysteine 129. 180-181 contacts ATP; that stretch reads NR.

It belongs to the NifH/BchL/ChlL family. In terms of assembly, homodimer. Protochlorophyllide reductase is composed of three subunits; ChlL, ChlN and ChlB. [4Fe-4S] cluster serves as cofactor.

It catalyses the reaction chlorophyllide a + oxidized 2[4Fe-4S]-[ferredoxin] + 2 ADP + 2 phosphate = protochlorophyllide a + reduced 2[4Fe-4S]-[ferredoxin] + 2 ATP + 2 H2O. Its pathway is porphyrin-containing compound metabolism; chlorophyll biosynthesis (light-independent). In terms of biological role, component of the dark-operative protochlorophyllide reductase (DPOR) that uses Mg-ATP and reduced ferredoxin to reduce ring D of protochlorophyllide (Pchlide) to form chlorophyllide a (Chlide). This reaction is light-independent. The L component serves as a unique electron donor to the NB-component of the complex, and binds Mg-ATP. In Nostoc punctiforme (strain ATCC 29133 / PCC 73102), this protein is Light-independent protochlorophyllide reductase iron-sulfur ATP-binding protein.